Consider the following 103-residue polypeptide: MSPPWKLFADHLRLTVRLTPNGGRDAFDGIETGSEGETYLKARVTAIPEKGKANKALIALVSKSLGVAKSSITLVSGETARKKILRIEGDPEDLAKKLETLSG.

This sequence belongs to the UPF0235 family.

In Rhizobium etli (strain CIAT 652), this protein is UPF0235 protein RHECIAT_CH0004196.